Here is a 526-residue protein sequence, read N- to C-terminus: Na(+)/H(+) antiporter NhaB (526 aa).

Transmembrane regions (helical) follow at residues 14-34, 35-55, 99-119, 122-142, 146-166, 206-226, 239-259, 307-327, 328-348, 357-377, 397-417, 451-471, and 479-499; these read FLGY…LINP, LLFY…EFIF, MLLV…LFVF, LLLR…AAAF, FLDA…FYGI, LMMH…VGEP, FVDF…CGIL, AVIG…VGLI, GLSV…HAIG, FTAL…QQLF, YLFN…SVYI, ATPN…APLI, and VIMA…CVEF.

It belongs to the NhaB Na(+)/H(+) (TC 2.A.34) antiporter family.

The protein localises to the cell inner membrane. The catalysed reaction is 2 Na(+)(in) + 3 H(+)(out) = 2 Na(+)(out) + 3 H(+)(in). Functionally, na(+)/H(+) antiporter that extrudes sodium in exchange for external protons. The chain is Na(+)/H(+) antiporter NhaB from Pectobacterium atrosepticum (strain SCRI 1043 / ATCC BAA-672) (Erwinia carotovora subsp. atroseptica).